The chain runs to 333 residues: Probable tRNA pseudouridine synthase B (333 aa).

The span at 1 to 14 shows a compositional bias: basic and acidic residues; it reads MKCPSREVFSKFEE. The disordered stretch occupies residues 1–27; that stretch reads MKCPSREVFSKFEESTNPQWGKPPSQR. Catalysis depends on D71, which acts as the Nucleophile. In terms of domain architecture, PUA spans 238-313; the sequence is LPKIWVRDSA…LVARTDRVVM (76 aa).

The protein belongs to the pseudouridine synthase TruB family. Type 2 subfamily.

The enzyme catalyses uridine(55) in tRNA = pseudouridine(55) in tRNA. Its function is as follows. Could be responsible for synthesis of pseudouridine from uracil-55 in the psi GC loop of transfer RNAs. The chain is Probable tRNA pseudouridine synthase B from Pyrobaculum aerophilum (strain ATCC 51768 / DSM 7523 / JCM 9630 / CIP 104966 / NBRC 100827 / IM2).